The chain runs to 278 residues: MDVRQSIHSEHAKTLDTQALRREFLIENIFVADEYTMFYSHIDRIIVGGIMPVSHSVEIGGEVGKQLGVSRLLDRRELGVINIGGAGAIIVDGQRHDIGHRDALYIGKGAKELVFVSNEASRPAKFYYNCAPAHTAYPTKKVSPADVAPVTLGDNLTSNRRTINKYFVPDVLETCQLSMGLTELAPGNLWNTMPCHTHERRMEVYLYFNMEEDSCVFHMMGQPQETRHIVMRNEQAVISPSWSIHSGVGTKAYTFIWGMVGENQVFDDMDHVAVQDLR.

Residues His196, His198, Glu203, and His245 each contribute to the Zn(2+) site.

This sequence belongs to the KduI family. Zn(2+) serves as cofactor.

It catalyses the reaction 5-dehydro-4-deoxy-D-glucuronate = 3-deoxy-D-glycero-2,5-hexodiulosonate. The protein operates within glycan metabolism; pectin degradation; 2-dehydro-3-deoxy-D-gluconate from pectin: step 4/5. Catalyzes the isomerization of 5-dehydro-4-deoxy-D-glucuronate to 3-deoxy-D-glycero-2,5-hexodiulosonate. The polypeptide is 4-deoxy-L-threo-5-hexosulose-uronate ketol-isomerase (Salmonella choleraesuis (strain SC-B67)).